Reading from the N-terminus, the 318-residue chain is tRNA U34 carboxymethyltransferase (318 aa).

Carboxy-S-adenosyl-L-methionine-binding positions include Lys-88, Trp-102, Lys-107, Gly-126, 176–177 (LE), Met-192, Tyr-196, and Arg-311.

The protein belongs to the class I-like SAM-binding methyltransferase superfamily. CmoB family. Homotetramer.

The enzyme catalyses carboxy-S-adenosyl-L-methionine + 5-hydroxyuridine(34) in tRNA = 5-carboxymethoxyuridine(34) in tRNA + S-adenosyl-L-homocysteine + H(+). Functionally, catalyzes carboxymethyl transfer from carboxy-S-adenosyl-L-methionine (Cx-SAM) to 5-hydroxyuridine (ho5U) to form 5-carboxymethoxyuridine (cmo5U) at position 34 in tRNAs. The sequence is that of tRNA U34 carboxymethyltransferase from Pseudomonas putida (strain W619).